Consider the following 333-residue polypeptide: Nuclear egress protein 1 (333 aa).

The interval 45-64 (SRRYKSVSRSGPSMRVRSRT) is disordered. The CCCH-type zinc finger occupies 128–251 (CLSLSGMGYH…YVIFPGKSVH (124 aa)).

It belongs to the herpesviridae NEC1 protein family. Forms a heterohexameric complex with NEC2. Interacts with capsid vertex specific component 2/CVC2; this interaction directs the capsid to the host inner nuclear membrane to initiate budding. In terms of processing, phosphorylated at serine residues in the N-terminus. This phosphorylation regulates the localization within the inner nuclear membrane.

Its subcellular location is the host nucleus inner membrane. Plays an essential role in virion nuclear egress, the first step of virion release from infected cell. Within the host nucleus, NEC1 interacts with the newly formed capsid through the vertexes and directs it to the inner nuclear membrane by associating with NEC2. Induces the budding of the capsid at the inner nuclear membrane as well as its envelopment into the perinuclear space. There, the NEC1/NEC2 complex promotes the fusion of the enveloped capsid with the outer nuclear membrane and the subsequent release of the viral capsid into the cytoplasm where it will reach the secondary budding sites in the host Golgi or trans-Golgi network. This chain is Nuclear egress protein 1, found in Varicella-zoster virus (strain Dumas) (HHV-3).